Consider the following 207-residue polypeptide: ATP phosphoribosyltransferase (207 aa).

The protein belongs to the ATP phosphoribosyltransferase family. Short subfamily. In terms of assembly, heteromultimer composed of HisG and HisZ subunits.

Its subcellular location is the cytoplasm. It carries out the reaction 1-(5-phospho-beta-D-ribosyl)-ATP + diphosphate = 5-phospho-alpha-D-ribose 1-diphosphate + ATP. It functions in the pathway amino-acid biosynthesis; L-histidine biosynthesis; L-histidine from 5-phospho-alpha-D-ribose 1-diphosphate: step 1/9. Catalyzes the condensation of ATP and 5-phosphoribose 1-diphosphate to form N'-(5'-phosphoribosyl)-ATP (PR-ATP). Has a crucial role in the pathway because the rate of histidine biosynthesis seems to be controlled primarily by regulation of HisG enzymatic activity. This Geobacillus kaustophilus (strain HTA426) protein is ATP phosphoribosyltransferase.